The following is a 464-amino-acid chain: Na(+)/H(+) antiporter NhaA (464 aa).

Transmembrane regions (helical) follow at residues 37–57 (GSGILLVFLTIVALVFANTSC), 82–102 (IHYWINDALMTLFFLMVGLEI), 118–138 (VLPIFAALGGMIVPALIYFSF), 145–165 (VSGWGIPMATDIAFAIAILLL), 176–196 (AVLVALAIVDDLGAVIVIAIF), 200–220 (NLAWSPLIAAFLCFAVLLLLN), 226–246 (ALWAYIAIGSLMWVFMLFSGV), 248–268 (ATVAGVLTALATPMNAVYSPT), 321–341 (ILNTPVYFLIVPLFVLFNAGV), 360–380 (VFFGLVFGKLIGVVSAIMICV), 396–416 (VLGIGMLAGIGFTMSIFVSEL), and 430–450 (ITILAASLTAATLGYCWLRFI).

The protein belongs to the NhaA Na(+)/H(+) (TC 2.A.33) antiporter family.

The protein localises to the cell inner membrane. The catalysed reaction is Na(+)(in) + 2 H(+)(out) = Na(+)(out) + 2 H(+)(in). In terms of biological role, na(+)/H(+) antiporter that extrudes sodium in exchange for external protons. The sequence is that of Na(+)/H(+) antiporter NhaA from Dichelobacter nodosus (strain VCS1703A).